Consider the following 140-residue polypeptide: Ctenidin-1 (140 aa).

The N-terminal stretch at 1-19 (MKHLIPLIVMASVVLAVYA) is a signal peptide. Glycine amide is present on Gly138.

This sequence belongs to the glycine-rich peptide family. Expressed in hemocytes (at protein level).

The protein resides in the secreted. Antimicrobial protein with bacteriostatic activity against the Gram-negative bacterium E.coli, and very weak activity against the Gram-positive bacterium S.aureus. Lacks activity against the yeast C.albicans. The sequence is that of Ctenidin-1 from Cupiennius salei (American wandering spider).